We begin with the raw amino-acid sequence, 246 residues long: 3-deoxy-manno-octulosonate cytidylyltransferase (246 aa).

This sequence belongs to the KdsB family.

Its subcellular location is the cytoplasm. It catalyses the reaction 3-deoxy-alpha-D-manno-oct-2-ulosonate + CTP = CMP-3-deoxy-beta-D-manno-octulosonate + diphosphate. It participates in nucleotide-sugar biosynthesis; CMP-3-deoxy-D-manno-octulosonate biosynthesis; CMP-3-deoxy-D-manno-octulosonate from 3-deoxy-D-manno-octulosonate and CTP: step 1/1. It functions in the pathway bacterial outer membrane biogenesis; lipopolysaccharide biosynthesis. Functionally, activates KDO (a required 8-carbon sugar) for incorporation into bacterial lipopolysaccharide in Gram-negative bacteria. The protein is 3-deoxy-manno-octulosonate cytidylyltransferase of Rickettsia felis (strain ATCC VR-1525 / URRWXCal2) (Rickettsia azadi).